Reading from the N-terminus, the 376-residue chain is Protein FhaE (376 aa).

Positions 1 to 37 (MSQIFADRRAAVPARVISFCGAALAVWAGLAVQPAMA) are cleaved as a signal peptide.

The protein is Protein FhaE (fhaE) of Bordetella pertussis (strain Tohama I / ATCC BAA-589 / NCTC 13251).